We begin with the raw amino-acid sequence, 200 residues long: 3-isopropylmalate dehydratase small subunit (200 aa).

The protein belongs to the LeuD family. LeuD type 1 subfamily. Heterodimer of LeuC and LeuD.

It carries out the reaction (2R,3S)-3-isopropylmalate = (2S)-2-isopropylmalate. It participates in amino-acid biosynthesis; L-leucine biosynthesis; L-leucine from 3-methyl-2-oxobutanoate: step 2/4. In terms of biological role, catalyzes the isomerization between 2-isopropylmalate and 3-isopropylmalate, via the formation of 2-isopropylmaleate. This chain is 3-isopropylmalate dehydratase small subunit, found in Vibrio atlanticus (strain LGP32) (Vibrio splendidus (strain Mel32)).